The chain runs to 256 residues: Glutamate racemase (256 aa).

Residues 11–12 and 43–44 each bind substrate; these read DS and YG. C74 (proton donor/acceptor) is an active-site residue. 75–76 contributes to the substrate binding site; it reads NT. C182 serves as the catalytic Proton donor/acceptor. Position 183–184 (183–184) interacts with substrate; the sequence is TH.

It belongs to the aspartate/glutamate racemases family.

The catalysed reaction is L-glutamate = D-glutamate. It participates in cell wall biogenesis; peptidoglycan biosynthesis. In terms of biological role, provides the (R)-glutamate required for cell wall biosynthesis. In Leptospira interrogans serogroup Icterohaemorrhagiae serovar copenhageni (strain Fiocruz L1-130), this protein is Glutamate racemase.